Here is a 189-residue protein sequence, read N- to C-terminus: Small ribosomal subunit protein uS5 (189 aa).

Residues 23 to 86 (FIDKLVHINR…ESAKREMIYV (64 aa)) enclose the S5 DRBM domain.

It belongs to the universal ribosomal protein uS5 family. Part of the 30S ribosomal subunit. Contacts proteins S4 and S8.

With S4 and S12 plays an important role in translational accuracy. Functionally, located at the back of the 30S subunit body where it stabilizes the conformation of the head with respect to the body. The protein is Small ribosomal subunit protein uS5 of Bartonella bacilliformis (strain ATCC 35685 / KC583 / Herrer 020/F12,63).